The chain runs to 314 residues: Solute carrier family 25 member 44 (314 aa).

3 Solcar repeats span residues lysine 18–phenylalanine 100, serine 107–glutamine 210, and proline 220–leucine 302. 6 consecutive transmembrane segments (helical) span residues phenylalanine 20 to arginine 42, threonine 71 to tyrosine 90, leucine 113 to valine 133, glycine 185 to tryptophan 201, isoleucine 222 to leucine 239, and leucine 278 to tyrosine 296.

This sequence belongs to the mitochondrial carrier (TC 2.A.29) family.

The protein resides in the mitochondrion membrane. It catalyses the reaction L-valine(in) = L-valine(out). The enzyme catalyses L-leucine(in) = L-leucine(out). Its function is as follows. Mitochondrial solute transporter which transports branched-chain amino acid (BCAA; valine, leucine and isoleucine) into mitochondria in brown adipose tissue (BAT). BAT is involved in BCAA catabolism and actively utilizes BCAA in the mitochondria for thermogenesis. This is Solute carrier family 25 member 44 from Pongo abelii (Sumatran orangutan).